Reading from the N-terminus, the 174-residue chain is UPF0200 protein PAE1629 (174 aa).

Residue 9 to 16 (GLPGSGKT) participates in ATP binding.

It belongs to the UPF0200 family.

The protein is UPF0200 protein PAE1629 of Pyrobaculum aerophilum (strain ATCC 51768 / DSM 7523 / JCM 9630 / CIP 104966 / NBRC 100827 / IM2).